Here is a 1028-residue protein sequence, read N- to C-terminus: Contactin-3 (1028 aa).

Positions 1 to 19 (MMLSWKQLILLSFIGCLAG) are cleaved as a signal peptide. Ig-like C2-type domains are found at residues 26-117 (PVFV…AKLQ), 122-208 (ENFK…ARVL), 227-313 (PKIE…GRLT), 318-402 (PYWV…AELK), 408-497 (PDFS…LVVT), and 499-593 (PTRI…AELI). Cystine bridges form between cysteine 50-cysteine 100, cysteine 144-cysteine 196, cysteine 249-cysteine 297, cysteine 339-cysteine 386, and cysteine 431-cysteine 479. N-linked (GlcNAc...) asparagine glycosylation is found at asparagine 65 and asparagine 193. N-linked (GlcNAc...) asparagine glycans are attached at residues asparagine 377, asparagine 468, asparagine 489, and asparagine 538. An intrachain disulfide couples cysteine 521 to cysteine 577. 4 consecutive Fibronectin type-III domains span residues 600-698 (PPEN…TEEA), 703-800 (APSE…SAEE), 805-901 (APSH…TKKT), and 902-998 (PPSQ…TSMD). Residues 684 to 714 (GEPSLPSEKVRTEEAAPEVAPSEVSGGGGSR) are disordered. N-linked (GlcNAc...) asparagine glycosylation is found at asparagine 765, asparagine 860, asparagine 895, asparagine 913, asparagine 931, and asparagine 956. The GPI-anchor amidated serine moiety is linked to residue serine 1002. The propeptide at 1003-1028 (TSAISDIHPVSGYISVLLFFIVNALW) is removed in mature form.

It belongs to the immunoglobulin superfamily. Contactin family. As to quaternary structure, interacts with PTPRG. Specifically expressed in brain. Not expressed in peripheral tissues such as heart, lung, liver, spleen, kidney and skeletal muscle. In brain, it is restricted to subsets of neurons such as Purkinje cells of the cerebellum, granule cells of the dentate gyrus, and neurons in the superficial layers of the cerebral cortex.

It is found in the cell membrane. Its function is as follows. Contactins mediate cell surface interactions during nervous system development. Has some neurite outgrowth-promoting activity. The sequence is that of Contactin-3 (Cntn3) from Rattus norvegicus (Rat).